The sequence spans 1545 residues: Tricalbin-3 (1545 aa).

The tract at residues 1–89 (MTGIKAQVHP…SNPEGKKQSS (89 aa)) is disordered. Residues 1–206 (MTGIKAQVHP…AYILENFYND (206 aa)) are Cytoplasmic-facing. Polar residues predominate over residues 62-80 (TKTSNSVSDVSKGQKTADS). Phosphoserine occurs at positions 67 and 112. A helical transmembrane segment spans residues 207–227 (WYCNIATVLGTCFFSWLFAYI). Position 228 (Gly-228) is a topological domain, extracellular. The helical transmembrane segment at 229–249 (FSWWSMIFIFLGTATVYNAEY) threads the bilayer. Residues 250–1545 (TRFNRNIRDD…VPEVPQEYTQ (1296 aa)) are Cytoplasmic-facing. The SMP-LTD domain maps to 272-479 (RVESTTWLNS…PPNHLDINVE (208 aa)). Residues 470 to 596 (PPNHLDINVE…LQNPVLDNQT (127 aa)) form the C2 1 domain. Residues 620–660 (EDKSEEKAVERAEAKAKGKKEDENEDTTEKEEDENEESSQT) adopt a coiled-coil conformation. The segment covering 624–641 (EEKAVERAEAKAKGKKED) has biased composition (basic and acidic residues). A disordered region spans residues 624-660 (EEKAVERAEAKAKGKKEDENEDTTEKEEDENEESSQT). Positions 642–658 (ENEDTTEKEEDENEESS) are enriched in acidic residues. C2 domains follow at residues 646–763 (TTEK…AQEF) and 783–897 (MTGA…SGKY). The stretch at 937-972 (SPEELVNVEKLEKELKEKKKKFEATQEENEQEMEKN) forms a coiled coil. The C2 4 domain occupies 1119–1234 (PTSVKLPSSE…EVGKTYNWNL (116 aa)). Ca(2+)-binding residues include Asp-1150, Asp-1156, Asp-1204, Asp-1206, and Asp-1212. Positions 1304–1404 (LLKSLGGNPM…NSRGHSRASS (101 aa)) are disordered. A compositionally biased stretch (polar residues) spans 1318 to 1328 (SSNGNESNGAK). Residues 1329–1340 (KSSEKKSFDRRS) show a composition bias toward basic and acidic residues. Ser-1340, Ser-1342, and Ser-1346 each carry phosphoserine. The segment covering 1341–1351 (PSNLNSTSVTP) has biased composition (polar residues). Thr-1350 is modified (phosphothreonine). Residue Ser-1354 is modified to Phosphoserine. Polar residues predominate over residues 1361-1373 (VPNTSYAPVQSAS). The segment covering 1377–1404 (KPTDNTSSSSNKKDTPSSNSRGHSRASS) has biased composition (low complexity). The 119-residue stretch at 1396–1514 (SRGHSRASSF…QQDGQISVKL (119 aa)) folds into the C2 5 domain. Ser-1400 is subject to Phosphoserine.

Belongs to the tricalbin family. As to quaternary structure, interacts with TCB2 via its C-terminal domain. It depends on Ca(2+) as a cofactor.

The protein localises to the cell membrane. The protein resides in the endoplasmic reticulum membrane. In terms of biological role, may play a role in membrane trafficking. In Saccharomyces cerevisiae (strain ATCC 204508 / S288c) (Baker's yeast), this protein is Tricalbin-3 (TCB3).